The sequence spans 329 residues: Carrier protein YMC2, mitochondrial (329 aa).

The interval 1–27 is disordered; it reads MSEEFPTPQLLDELEDQQKVTTPNEKR. Residues 1 to 33 constitute a mitochondrion transit peptide; that stretch reads MSEEFPTPQLLDELEDQQKVTTPNEKRELSSNR. Solcar repeat units lie at residues 34-115, 143-226, and 238-325; these read VLKD…MKRF, SQYY…LVAR, and PPWK…VMRF. 6 helical membrane passes run 38-58, 84-104, 140-160, 205-225, 243-263, and 297-318; these read IFAG…FDTT, VFAF…CVSV, LPLS…SFLA, TMIR…ALVA, CLFG…LDVV, and FFKG…TFLT.

It belongs to the mitochondrial carrier (TC 2.A.29) family.

It is found in the mitochondrion inner membrane. In Saccharomyces cerevisiae (strain ATCC 204508 / S288c) (Baker's yeast), this protein is Carrier protein YMC2, mitochondrial (YMC2).